A 240-amino-acid polypeptide reads, in one-letter code: NAD-dependent protein deacylase Sir2 (240 aa).

The 235-residue stretch at 1 to 235 folds into the Deacetylase sirtuin-type domain; the sequence is MQVTVLSGAG…PTLLQRLPEL (235 aa). 8 to 28 lines the NAD(+) pocket; the sequence is GAGISAESGVPTFRDAETGLW. 2 residues coordinate substrate: tyrosine 53 and arginine 56. NAD(+) is bound at residue 86-89; sequence QNID. Histidine 104 functions as the Proton acceptor in the catalytic mechanism. Zn(2+) contacts are provided by cysteine 112, cysteine 115, cysteine 138, and cysteine 140. Residues 177–179, 203–205, and alanine 221 each bind NAD(+); these read GTS and NPE.

It belongs to the sirtuin family. Class III subfamily. In terms of assembly, interacts with both Ku and LigD; may form a trimeric complex during NHEJ. The cofactor is Zn(2+).

The protein resides in the cytoplasm. The enzyme catalyses N(6)-succinyl-L-lysyl-[protein] + NAD(+) + H2O = 2''-O-succinyl-ADP-D-ribose + nicotinamide + L-lysyl-[protein]. It carries out the reaction N(6)-acetyl-L-lysyl-[protein] + NAD(+) + H2O = 2''-O-acetyl-ADP-D-ribose + nicotinamide + L-lysyl-[protein]. Its function is as follows. NAD-dependent lysine deacetylase and desuccinylase that specifically removes acetyl and succinyl groups on target proteins. Modulates the activities of several proteins which are inactive in their acylated form. Functionally, involved in non-homologous end joining (NHEJ) repair of blunt, 5' overhang and 3' overhang DNA double strand breaks (DSB). Overexpression increases the efficiency of NHEJ of the above DSBs 2-fold with no effect on repair fidelity. In Mycolicibacterium smegmatis (strain ATCC 700084 / mc(2)155) (Mycobacterium smegmatis), this protein is NAD-dependent protein deacylase Sir2 (sir2).